Reading from the N-terminus, the 187-residue chain is Casparian strip membrane protein 5 (187 aa).

At 1–24 (MKSGQAEIMETSKGIQKSGLMSRR) the chain is on the cytoplasmic side. The helical transmembrane segment at 25-45 (IAILEFILRIVAFFNTIGSAI) threads the bilayer. Topologically, residues 46–74 (LMGTTHETLPFFTQFIRFQAEYNDLPALT) are extracellular. Residues 75–95 (FFVVANAVVSGYLILSLTLAF) form a helical membrane-spanning segment. Over 96–107 (VHIVKRKTQNTR) the chain is Cytoplasmic. A helical membrane pass occupies residues 108-128 (ILLIILDVAMLGLLTSGASSA). Topologically, residues 129–161 (AAIVYLAHNGNNKTNWFAICQQFNSFCERISGS) are extracellular. The N-linked (GlcNAc...) asparagine glycan is linked to Asn-140. A helical membrane pass occupies residues 162 to 182 (LIGSFIAIVLLILLILLSAIA). Over 183-187 (LSRRH) the chain is Cytoplasmic.

Belongs to the Casparian strip membrane proteins (CASP) family. Homodimer and heterodimers with other CASP proteins. Interacts with CASP1, CASP3 and CASP4.

The protein resides in the cell membrane. In terms of biological role, regulates membrane-cell wall junctions and localized cell wall deposition. Required for establishment of the Casparian strip membrane domain (CSD) and the subsequent formation of Casparian strips, a cell wall modification of the root endodermis that determines an apoplastic barrier between the intraorganismal apoplasm and the extraorganismal apoplasm and prevents lateral diffusion. The protein is Casparian strip membrane protein 5 (CASP5) of Arabidopsis thaliana (Mouse-ear cress).